Consider the following 500-residue polypeptide: Versicolorin B desaturase (500 aa).

A helical transmembrane segment spans residues 3-23 (FLSLPSLVIVIPVGYLLFHLG). 2 N-linked (GlcNAc...) asparagine glycosylation sites follow: asparagine 243 and asparagine 400. Cysteine 438 contributes to the heme binding site.

It belongs to the cytochrome P450 family. Heme serves as cofactor.

It is found in the membrane. It catalyses the reaction versicolorin B + NADPH + O2 + H(+) = versicolorin A + NADP(+) + 2 H2O. It participates in mycotoxin biosynthesis; aflatoxin biosynthesis. Its function is as follows. Versicolorin B desaturase; part of the gene cluster that mediates the biosynthesis of aflatoxins, a group of polyketide-derived furanocoumarins, and part of the most toxic and carcinogenic compounds among the known mycotoxins. The four major aflatoxins produced by A.parasiticus are aflatoxin B1 (AFB1), aflatoxin B2 (AFB2), aflatoxin G1 (AFG1) and aflatoxin G2 (AFG2). Within the aflatoxin pathway, the versicolorin B desaturase aflL catalyzes the conversion of versicolorin B (VERB) to versicolorin A (VERA). The biosynthesis of aflatoxins begins with the norsolorinic acid synthase aflC that combines a hexanoyl starter unit produced by the fatty acid synthase aflA/aflB and 7 malonyl-CoA extender units to synthesize the precursor NOR. The second step is the conversion of NOR to averantin and requires the norsolorinic acid ketoreductase aflD, which catalyzes the dehydration of norsolorinic acid to form (1'S)-averantin. The norsolorinic acid reductases aflE and aflF may also play a role in the conversion of NOR to AVN. The cytochrome P450 monooxygenase aflG then catalyzes the hydroxylation of AVN to 5'hydroxyaverantin (HAVN). The next step is performed by the 5'-hydroxyaverantin dehydrogenase aflH that transforms HAVN to 5'-oxoaverantin (OAVN) which is further converted to averufin (AVF) by aflK that plays a dual role in the pathway, as a 5'-oxoaverantin cyclase that mediates conversion of 5'-oxoaverantin, as well as a versicolorin B synthase in a later step in the pathway. The averufin oxidase aflI catalyzes the conversion of AVF to versiconal hemiacetal acetate (VHA). VHA is then the substrate for the versiconal hemiacetal acetate esterase aflJ to yield versiconal (VAL). Versicolorin B synthase aflK then converts VAL to versicolorin B (VERB) by closing the bisfuran ring of aflatoxin which is required for DNA-binding, thus giving to aflatoxin its activity as a mutagen. Then, the activity of the versicolorin B desaturase aflL leads to versicolorin A (VERA). A branch point starts from VERB since it can also be converted to dihydrodemethylsterigmatocystin (DMDHST), probably also by aflL, VERA being a precursor for aflatoxins B1 and G1, and DMDHST for aflatoxins B2 and G2. Next, the versicolorin reductase aflM and the cytochrome P450 monooxygenase aflN are involved in conversion of VERA to demethylsterigmatocystin (DMST). AflX and aflY seem also involved in this step, through probable aflX-mediated epoxide ring-opening step following versicolorin A oxidation and aflY-mediated Baeyer-Villiger oxidation required for the formation of the xanthone ring. The methyltransferase aflO then leads to the modification of DMST to sterigmatocystin (ST), and of DMDHST to dihydrosterigmatocystin (DHST). Both ST and DHST are then substrates of the O-methyltransferase aflP to yield O-methylsterigmatocystin (OMST) and dihydro-O-methylsterigmatocystin (DHOMST), respectively. Finally OMST is converted to aflatoxins B1 and G1, and DHOMST to aflatoxins B2 and G2, via the action of several enzymes including O-methylsterigmatocystin oxidoreductase aflQ, the cytochrome P450 monooxygenase aflU, but also the NADH-dependent flavin oxidoreductase nadA which is specifically required for the synthesis of AFG1. In Aspergillus parasiticus (strain ATCC 56775 / NRRL 5862 / SRRC 143 / SU-1), this protein is Versicolorin B desaturase.